Here is a 214-residue protein sequence, read N- to C-terminus: ATP phosphoribosyltransferase (214 aa).

Belongs to the ATP phosphoribosyltransferase family. Short subfamily. In terms of assembly, heteromultimer composed of HisG and HisZ subunits.

It is found in the cytoplasm. The enzyme catalyses 1-(5-phospho-beta-D-ribosyl)-ATP + diphosphate = 5-phospho-alpha-D-ribose 1-diphosphate + ATP. It participates in amino-acid biosynthesis; L-histidine biosynthesis; L-histidine from 5-phospho-alpha-D-ribose 1-diphosphate: step 1/9. Its function is as follows. Catalyzes the condensation of ATP and 5-phosphoribose 1-diphosphate to form N'-(5'-phosphoribosyl)-ATP (PR-ATP). Has a crucial role in the pathway because the rate of histidine biosynthesis seems to be controlled primarily by regulation of HisG enzymatic activity. The protein is ATP phosphoribosyltransferase of Deinococcus deserti (strain DSM 17065 / CIP 109153 / LMG 22923 / VCD115).